A 270-amino-acid chain; its full sequence is Probable inositol 1-monophosphatase ImpA (270 aa).

Residues glutamate 69, aspartate 85, isoleucine 87, and aspartate 88 each coordinate Mg(2+). Position 69 (glutamate 69) interacts with substrate. Residues 87–90 (IDGT), arginine 187, and aspartate 216 contribute to the substrate site. A Mg(2+)-binding site is contributed by aspartate 216.

Belongs to the inositol monophosphatase superfamily. It depends on Mg(2+) as a cofactor.

The enzyme catalyses a myo-inositol phosphate + H2O = myo-inositol + phosphate. Its pathway is polyol metabolism; myo-inositol biosynthesis; myo-inositol from D-glucose 6-phosphate: step 2/2. Its function is as follows. Catalyzes the dephosphorylation of inositol 1-phosphate (I-1-P) to yield free myo-inositol, a key metabolite in mycobacteria. In Mycobacterium tuberculosis (strain ATCC 25618 / H37Rv), this protein is Probable inositol 1-monophosphatase ImpA (impA).